We begin with the raw amino-acid sequence, 237 residues long: Trypsin-1 (237 aa).

In terms of domain architecture, Peptidase S1 spans 1-237 (IVGGTDAVLG…HVDWIKANAV (237 aa)). Cysteine 30 and cysteine 46 are disulfide-bonded. The active-site Charge relay system is histidine 45. Residues glutamate 64, valine 69, and glutamate 74 each contribute to the Ca(2+) site. The active-site Charge relay system is the aspartate 96. Intrachain disulfides connect cysteine 159/cysteine 174 and cysteine 185/cysteine 213. The active-site Charge relay system is the serine 189.

The protein belongs to the peptidase S1 family. Ca(2+) is required as a cofactor.

The protein localises to the secreted. It is found in the extracellular space. It catalyses the reaction Preferential cleavage: Arg-|-Xaa, Lys-|-Xaa.. This Astacus astacus (Noble crayfish) protein is Trypsin-1.